Here is an 83-residue protein sequence, read N- to C-terminus: Mu-theraphotoxin-Hhn2b 3 (83 aa).

The first 21 residues, 1–21 (MKASMFLALAGLVLLFVVCYA), serve as a signal peptide directing secretion. The propeptide occupies 22 to 48 (SESEEKEFPRELISKIFAVDDFKGEVR). 3 disulfide bridges follow: C50/C65, C57/C70, and C64/C77. L81 carries the post-translational modification Leucine amide.

This sequence belongs to the neurotoxin 10 (Hwtx-1) family. 14 (Hntx-1) subfamily. As to quaternary structure, monomer. In terms of tissue distribution, expressed by the venom gland.

It is found in the secreted. Its function is as follows. Weakly blocks the rat SCN2A/SCN1B (Nav1.2/beta-1) sodium channel (IC(50)=68 uM) and the insect sodium channel para/tipE (IC(50)=4.3 uM), without altering the activation or inactivation kinetics (depressant toxin). This is Mu-theraphotoxin-Hhn2b 3 from Cyriopagopus hainanus (Chinese bird spider).